We begin with the raw amino-acid sequence, 351 residues long: Histidinol-phosphate aminotransferase (351 aa).

Residue lysine 221 is modified to N6-(pyridoxal phosphate)lysine.

The protein belongs to the class-II pyridoxal-phosphate-dependent aminotransferase family. Histidinol-phosphate aminotransferase subfamily. As to quaternary structure, homodimer. Pyridoxal 5'-phosphate serves as cofactor.

It carries out the reaction L-histidinol phosphate + 2-oxoglutarate = 3-(imidazol-4-yl)-2-oxopropyl phosphate + L-glutamate. It participates in amino-acid biosynthesis; L-histidine biosynthesis; L-histidine from 5-phospho-alpha-D-ribose 1-diphosphate: step 7/9. In Staphylococcus haemolyticus (strain JCSC1435), this protein is Histidinol-phosphate aminotransferase.